The chain runs to 560 residues: Beta-glucosidase 26, peroxisomal (560 aa).

A beta-D-glucoside contacts are provided by residues glutamine 33, histidine 137, 182-183 (NE), tyrosine 326, glutamate 398, tryptophan 450, 457-458 (EW), and tyrosine 466. Residue glutamate 183 is the Proton donor of the active site. Glutamate 398 (nucleophile) is an active-site residue.

This sequence belongs to the glycosyl hydrolase 1 family.

The protein localises to the peroxisome. It catalyses the reaction Hydrolysis of terminal, non-reducing beta-D-glucosyl residues with release of beta-D-glucose.. Its function is as follows. Possesses beta-glucosidase activity toward 4-methyl-umbelliferyl-beta-D-glucoside in vitro. Possesses myrosinase activity toward indol-3-yl-methylglucosinolate (I3M) and 4-methoxy-indol-3-yl-methylglucosinolate (4MO-I3M) in vivo. Component of an inducible preinvasion resistance mechanism that prevents penetration of the nonhost fungal species B.graminis and E.pisi. Involved in indole glucosinolate (IGS) activation during pattern-triggered immunity (PTI). Functions as a myrosinase for the breakdown of flg22-triggered IGS. Required for both callose deposition and glucosinolate activation during pathogen-triggered resistance. During fungal attack, required for IGS activation that mediates broad-spectrum antifungal defense. The protein is Beta-glucosidase 26, peroxisomal of Arabidopsis thaliana (Mouse-ear cress).